The following is a 900-amino-acid chain: Alanine--tRNA ligase (900 aa).

Zn(2+) is bound by residues His-604, His-608, Cys-708, and His-712.

This sequence belongs to the class-II aminoacyl-tRNA synthetase family. Zn(2+) serves as cofactor.

It is found in the cytoplasm. It carries out the reaction tRNA(Ala) + L-alanine + ATP = L-alanyl-tRNA(Ala) + AMP + diphosphate. In terms of biological role, catalyzes the attachment of alanine to tRNA(Ala) in a two-step reaction: alanine is first activated by ATP to form Ala-AMP and then transferred to the acceptor end of tRNA(Ala). Also edits incorrectly charged Ser-tRNA(Ala) and Gly-tRNA(Ala) via its editing domain. This is Alanine--tRNA ligase from Saccharolobus islandicus (strain L.S.2.15 / Lassen #1) (Sulfolobus islandicus).